The sequence spans 296 residues: NAD kinase (296 aa).

Asp-72 acts as the Proton acceptor in catalysis. NAD(+) contacts are provided by residues 72-73 (DG), 146-147 (ND), Arg-157, Lys-174, Asp-176, 187-192 (TAYALS), and Gln-247.

Belongs to the NAD kinase family. Requires a divalent metal cation as cofactor.

It is found in the cytoplasm. The enzyme catalyses NAD(+) + ATP = ADP + NADP(+) + H(+). Its function is as follows. Involved in the regulation of the intracellular balance of NAD and NADP, and is a key enzyme in the biosynthesis of NADP. Catalyzes specifically the phosphorylation on 2'-hydroxyl of the adenosine moiety of NAD to yield NADP. The chain is NAD kinase from Pseudomonas entomophila (strain L48).